The chain runs to 489 residues: Metal cation symporter ZIP14 (489 aa).

The N-terminal stretch at 1–28 (MKRLHPALPSCLLLVLFGIWRTAPQTHA) is a signal peptide. At 29–155 (SSAGLPPLSA…PSAIEVWGYG (127 aa)) the chain is on the extracellular side. 4 N-linked (GlcNAc...) asparagine glycosylation sites follow: Asn-52, Asn-75, Asn-85, and Asn-100. Residues 156 to 176 (FLCVTVISLCSLMGASVVPFM) form a helical membrane-spanning segment. At 177-184 (KKTFYKRL) the chain is on the cytoplasmic side. A helical membrane pass occupies residues 185 to 205 (LLYFIALAIGTLYSNALFQLI). At 206 to 221 (PEAFGFNPQDNYVSKS) the chain is on the extracellular side. Residues 222–242 (AVVFGGFYLFFFTEKILKMLL) form a helical membrane-spanning segment. Residues 243-349 (KQKNEHHHGH…SDGLHNFIDG (107 aa)) are Cytoplasmic-facing. The short motif at 248 to 255 (HHHGHNHF) is the HHHGHXHX-motif element. The helical transmembrane segment at 350–370 (LAIGASFTVSVFQGISTSVAI) threads the bilayer. At 371–394 (LCEEFPHELGDFVILLNAGMSIQQ) the chain is on the extracellular side. The XEXPHE-motif motif lies at 373 to 378 (EEFPHE). Residues 395–415 (ALFFNFLSACCCYLGLAFGIL) form a helical membrane-spanning segment. At 416-421 (AGSHFS) the chain is on the cytoplasmic side. A helical membrane pass occupies residues 422-442 (ANWIFALAGGMFLYIALADMF). Topologically, residues 443-457 (PEMNEVCQEDEKNDS) are extracellular. A helical membrane pass occupies residues 458–478 (FLVPFVIQNLGLLTGFSIMLV). The Cytoplasmic portion of the chain corresponds to 479-489 (LTMYSGQIQIG).

Belongs to the ZIP transporter (TC 2.A.5) family. Homotrimer. Ubiquitinated. Ubiquitination occurs upon iron depletion. The ubiquitinated form undergoes proteasomal degradation. In terms of processing, N-glycosylated. N-glycosylation at Asn-100 is required for iron-regulated extraction of the transporter from membranes and subsequent proteasomal degradation. Widely expressed. Highly and transiently expressed during the early stage of adipocyte differentiation. Strongly expressed in liver, preadipocyte, duodenum and jejunum, moderately in brain, heart, skeletal muscle, spleen, pancreas, kidney and white adipose cells. Expression is almost undetectable in lung, testis and brown adipose cells. Expressed by chondrocytes and pituitary cells. As to expression, more strongly expressed in brain. In terms of tissue distribution, more strongly expressed in liver, kidney and duodenum.

Its subcellular location is the cell membrane. It is found in the apical cell membrane. The protein localises to the basolateral cell membrane. The protein resides in the early endosome membrane. It localises to the late endosome membrane. Its subcellular location is the lysosome membrane. The enzyme catalyses Zn(2+)(out) + 2 hydrogencarbonate(out) = Zn(2+)(in) + 2 hydrogencarbonate(in). The catalysed reaction is Mn(2+)(out) + 2 hydrogencarbonate(out) = Mn(2+)(in) + 2 hydrogencarbonate(in). It carries out the reaction Fe(2+)(out) + 2 hydrogencarbonate(out) = Fe(2+)(in) + 2 hydrogencarbonate(in). It catalyses the reaction Cd(2+)(out) + 2 hydrogencarbonate(out) = Cd(2+)(in) + 2 hydrogencarbonate(in). With respect to regulation, inhibited by cyanide and therefore dependent of an energy source. Inhibited by DIDS/4,4'-diisothiocyanatostilbene-2,2'-disulfonic acid, an inhibitor hydrogencarbonate-dependent transporters. Functionally, electroneutral transporter of the plasma membrane mediating the cellular uptake of the divalent metal cations zinc, manganese and iron that are important for tissue homeostasis, metabolism, development and immunity. Functions as an energy-dependent symporter, transporting through the membranes an electroneutral complex composed of a divalent metal cation and two bicarbonate anions. Beside these endogenous cellular substrates, can also import cadmium a non-essential metal which is cytotoxic and carcinogenic. Controls the cellular uptake by the intestinal epithelium of systemic zinc, which is in turn required to maintain tight junctions and the intestinal permeability. Modifies the activity of zinc-dependent phosphodiesterases, thereby indirectly regulating G protein-coupled receptor signaling pathways important for gluconeogenesis and chondrocyte differentiation. Regulates insulin receptor signaling, glucose uptake, glycogen synthesis and gluconeogenesis in hepatocytes through the zinc-dependent intracellular catabolism of insulin. Through zinc cellular uptake also plays a role in the adaptation of cells to endoplasmic reticulum stress. Major manganese transporter of the basolateral membrane of intestinal epithelial cells, it plays a central role in manganese systemic homeostasis through intestinal manganese uptake. Also involved in manganese extracellular uptake by cells of the blood-brain barrier. May also play a role in manganese and zinc homeostasis participating in their elimination from the blood through the hepatobiliary excretion. Also functions in the extracellular uptake of free iron. May also function intracellularly and mediate the transport from endosomes to cytosol of iron endocytosed by transferrin. Plays a role in innate immunity by regulating the expression of cytokines by activated macrophages. The polypeptide is Metal cation symporter ZIP14 (Mus musculus (Mouse)).